We begin with the raw amino-acid sequence, 365 residues long: Alanine racemase (365 aa).

The active-site Proton acceptor; specific for D-alanine is lysine 35. Lysine 35 carries the post-translational modification N6-(pyridoxal phosphate)lysine. Arginine 130 provides a ligand contact to substrate. Tyrosine 256 serves as the catalytic Proton acceptor; specific for L-alanine. Methionine 304 contributes to the substrate binding site.

This sequence belongs to the alanine racemase family. Pyridoxal 5'-phosphate serves as cofactor.

It carries out the reaction L-alanine = D-alanine. It functions in the pathway amino-acid biosynthesis; D-alanine biosynthesis; D-alanine from L-alanine: step 1/1. In terms of biological role, catalyzes the interconversion of L-alanine and D-alanine. May also act on other amino acids. This is Alanine racemase (alr) from Acidovorax sp. (strain JS42).